A 92-amino-acid polypeptide reads, in one-letter code: LYR motif-containing protein 4 homolog (92 aa).

Residues 48–68 adopt a coiled-coil conformation; the sequence is AEIDRQMAEGQQNLELIRRQV.

The protein belongs to the complex I LYR family. Component of the mitochondrial core iron-sulfur cluster (ISC) assembly complex at least composed of the cysteine desulfurase Nfs1, the scaffold protein IscU, the accessory protein bcn92/Isd11/Lyrm4, and probably fh/frataxin. Interacts with Nfs1.

It is found in the mitochondrion. Functionally, stabilizing factor of the core iron-sulfur cluster (ISC) assembly complex that regulates the stability and cysteine desulfurase activity of Nfs1 and participates in the [2Fe-2S] clusters assembly on the scaffolding protein IscU. This chain is LYR motif-containing protein 4 homolog, found in Drosophila melanogaster (Fruit fly).